Reading from the N-terminus, the 513-residue chain is Maturase K (513 aa).

It belongs to the intron maturase 2 family. MatK subfamily.

It localises to the plastid. It is found in the chloroplast. Functionally, usually encoded in the trnK tRNA gene intron. Probably assists in splicing its own and other chloroplast group II introns. In Astrebla lappacea (Curly Mitchell grass), this protein is Maturase K.